The following is a 671-amino-acid chain: DNA ligase (671 aa).

NAD(+)-binding positions include 32–36 (DAEYD), 81–82 (SL), and Glu-113. Lys-115 acts as the N6-AMP-lysine intermediate in catalysis. Residues Arg-136, Glu-173, Lys-290, and Lys-314 each contribute to the NAD(+) site. 4 residues coordinate Zn(2+): Cys-408, Cys-411, Cys-426, and Cys-432. The BRCT domain maps to 593 to 671 (EIDSPFAGKT…EAEMLRLLGS (79 aa)).

It belongs to the NAD-dependent DNA ligase family. LigA subfamily. Mg(2+) serves as cofactor. The cofactor is Mn(2+).

The enzyme catalyses NAD(+) + (deoxyribonucleotide)n-3'-hydroxyl + 5'-phospho-(deoxyribonucleotide)m = (deoxyribonucleotide)n+m + AMP + beta-nicotinamide D-nucleotide.. Functionally, DNA ligase that catalyzes the formation of phosphodiester linkages between 5'-phosphoryl and 3'-hydroxyl groups in double-stranded DNA using NAD as a coenzyme and as the energy source for the reaction. It is essential for DNA replication and repair of damaged DNA. This chain is DNA ligase, found in Escherichia coli O7:K1 (strain IAI39 / ExPEC).